Reading from the N-terminus, the 289-residue chain is Secretory carrier-associated membrane protein (289 aa).

A disordered region spans residues 1-65 (MAGRYDPNPF…TSTDGKKKER (65 aa)). Over 1-123 (MAGRYDPNPF…EIPIHLRTLQ (123 aa)) the chain is Cytoplasmic. Positions 16–31 (NPFSNPRSAASATNSR) are enriched in polar residues. Residues 59–98 (DGKKKERDLQAKEAELRKREQEVRRKEEAIARAGIVIEEK) adopt a coiled-coil conformation. The next 4 membrane-spanning stretches (helical) occupy residues 124-144 (YVAF…VVSV), 156-176 (IWFL…ALWY), 191-211 (FGWF…AAVA), and 239-259 (IFYF…IWVI). Residues 260–289 (QQVYMHFRGGGKTAEMKREAALGAMGAALR) are Cytoplasmic-facing.

This sequence belongs to the SCAMP family.

It localises to the cell membrane. The protein localises to the cytoplasmic vesicle. Its subcellular location is the secretory vesicle membrane. Functionally, probably involved in membrane trafficking. The sequence is that of Secretory carrier-associated membrane protein (PSAM2) from Pisum sativum (Garden pea).